A 533-amino-acid polypeptide reads, in one-letter code: Apolipoprotein N-acyltransferase (533 aa).

6 helical membrane-spanning segments follow: residues 17-37 (ALLAILAGAIGVLALPPFGFF), 74-94 (WLFGFGYFVAGLWWLGHALLI), 105-125 (LAILGLPAFLAIFYGVAAVLA), 127-147 (LLWSDGMGRIAALAFGFGLLE), 178-198 (VIGVLGVTVLAVFVFAAPALL), and 205-225 (VPGIGLAVLIAAAHFAYGYYA). Positions 245–495 (VQPAIDQEAK…QGFVDSTLSG (251 aa)) constitute a CN hydrolase domain. Catalysis depends on E290, which acts as the Proton acceptor. Residue K354 is part of the active site. C407 acts as the Nucleophile in catalysis. Residues 509–529 (YFWLIIGIVGMIAVISRMGFI) traverse the membrane as a helical segment.

This sequence belongs to the CN hydrolase family. Apolipoprotein N-acyltransferase subfamily.

The protein resides in the cell inner membrane. It carries out the reaction N-terminal S-1,2-diacyl-sn-glyceryl-L-cysteinyl-[lipoprotein] + a glycerophospholipid = N-acyl-S-1,2-diacyl-sn-glyceryl-L-cysteinyl-[lipoprotein] + a 2-acyl-sn-glycero-3-phospholipid + H(+). It participates in protein modification; lipoprotein biosynthesis (N-acyl transfer). In terms of biological role, catalyzes the phospholipid dependent N-acylation of the N-terminal cysteine of apolipoprotein, the last step in lipoprotein maturation. This Rhizobium rhizogenes (strain K84 / ATCC BAA-868) (Agrobacterium radiobacter) protein is Apolipoprotein N-acyltransferase.